The following is a 144-amino-acid chain: 3-dehydroquinate dehydratase (144 aa).

The active-site Proton acceptor is Tyr-22. Residues Asn-71, His-77, and Asp-84 each coordinate substrate. The Proton donor role is filled by His-97. Residues 98 to 99 (IS) and Arg-108 each bind substrate.

Belongs to the type-II 3-dehydroquinase family. In terms of assembly, homododecamer.

The enzyme catalyses 3-dehydroquinate = 3-dehydroshikimate + H2O. The protein operates within metabolic intermediate biosynthesis; chorismate biosynthesis; chorismate from D-erythrose 4-phosphate and phosphoenolpyruvate: step 3/7. Its function is as follows. Catalyzes a trans-dehydration via an enolate intermediate. In Thermotoga petrophila (strain ATCC BAA-488 / DSM 13995 / JCM 10881 / RKU-1), this protein is 3-dehydroquinate dehydratase.